Consider the following 452-residue polypeptide: Proline--tRNA ligase (452 aa).

It belongs to the class-II aminoacyl-tRNA synthetase family. ProS type 2 subfamily. Homodimer.

It localises to the cytoplasm. It catalyses the reaction tRNA(Pro) + L-proline + ATP = L-prolyl-tRNA(Pro) + AMP + diphosphate. Its function is as follows. Catalyzes the attachment of proline to tRNA(Pro) in a two-step reaction: proline is first activated by ATP to form Pro-AMP and then transferred to the acceptor end of tRNA(Pro). The protein is Proline--tRNA ligase of Jannaschia sp. (strain CCS1).